The chain runs to 808 residues: Probable phosphoketolase 1 (808 aa).

It belongs to the XFP family. It depends on thiamine diphosphate as a cofactor.

The sequence is that of Probable phosphoketolase 1 from Nostoc sp. (strain PCC 7120 / SAG 25.82 / UTEX 2576).